We begin with the raw amino-acid sequence, 327 residues long: GDP-mannose transporter (327 aa).

Over M1–S4 the chain is Cytoplasmic. The helical transmembrane segment at L5–L25 threads the bilayer. The Lumenal segment spans residues M26 to G36. Residues F37 to I57 form a helical membrane-spanning segment. Topologically, residues G58 to K78 are cytoplasmic. A helical membrane pass occupies residues W79–S93. The Lumenal portion of the chain corresponds to S94–I102. A helical membrane pass occupies residues P103–G125. Topologically, residues G126–M131 are cytoplasmic. Residues A132–G149 form a helical membrane-spanning segment. The Lumenal portion of the chain corresponds to D150–A163. An N-linked (GlcNAc...) asparagine glycan is attached at N158. A helical membrane pass occupies residues L164–I184. The Cytoplasmic portion of the chain corresponds to M185–S207. Residues I208–V228 form a helical membrane-spanning segment. Topologically, residues N229 to T238 are lumenal. N234 is a glycosylation site (N-linked (GlcNAc...) asparagine). A helical transmembrane segment spans residues I239–C259. Topologically, residues V260–T266 are cytoplasmic. A helical transmembrane segment spans residues T267–A289. At A290–N292 the chain is on the lumenal side. Residues F293–A312 traverse the membrane as a helical segment. At K313–K327 the chain is on the cytoplasmic side.

It belongs to the TPT transporter family. SLC35D subfamily. In terms of assembly, homooligomer.

The protein localises to the golgi apparatus membrane. Its subcellular location is the cytoplasmic vesicle membrane. The protein resides in the endoplasmic reticulum membrane. Involved in the import of GDP-mannose from the cytoplasm into the Golgi lumen. In Scheffersomyces stipitis (strain ATCC 58785 / CBS 6054 / NBRC 10063 / NRRL Y-11545) (Yeast), this protein is GDP-mannose transporter (VRG4).